Reading from the N-terminus, the 823-residue chain is Ankyrin repeat domain-containing protein 20B (823 aa).

ANK repeat units lie at residues 32–65 (SELQ…ARDK), 66–95 (QHRT…QIDI), 99–128 (ENRT…NPNL), 132–161 (YGNT…HIEA), 165–194 (DSNT…STHA), and 198–227 (LRRS…DVFA). 2 disordered regions span residues 302–343 (PEKV…GVED) and 355–401 (VQTL…QLSE). Positions 372-382 (QERHERSEKKQ) are enriched in basic and acidic residues. Coiled-coil stretches lie at residues 431–480 (KKLK…KQLE), 565–724 (EMIT…NNST), and 776–805 (LVLE…EKAE).

In Homo sapiens (Human), this protein is Ankyrin repeat domain-containing protein 20B (ANKRD20A8P).